A 399-amino-acid chain; its full sequence is MGMGRYQKSATSGVSARWVFVLCISSFLLGVLVVNRLLASFETVDGIERASPEQNDQSRSLNPLVDCESKEGDILSRVSHTHDVIKTLDKTISSLEVELATARAARSDGRDGSPAVAKTVADQSKIRPRMFFVMGIMTAFSSRKRRDSIRGTWLPKGDELKRLETEKGIIMRFVIGHSSSPGGVLDHTIEAEEEQHKDFFRLNHIEGYHELSSKTQIYFSSAVAKWDADFYIKVDDDVHVNLGMLGSTLARHRSKPRVYIGCMKSGPVLAQKGVKYHEPEYWKFGEEGNKYFRHATGQIYAISKDLATYISVNRQLLHKYANEDVSLGSWFIGLDVEHIDDRSLCCGTPLDCEWKGQAGNPCAASFDWSCSGICKSVDRMLEVHQRCGEGDGAIWHSSF.

The Cytoplasmic portion of the chain corresponds to methionine 1–serine 12. Residues glycine 13–asparagine 35 form a helical; Signal-anchor for type II membrane protein membrane-spanning segment. The Lumenal segment spans residues arginine 36–phenylalanine 399.

This sequence belongs to the glycosyltransferase 31 family. As to quaternary structure, interacts with GALT29A. Mn(2+) is required as a cofactor.

It is found in the golgi apparatus membrane. It functions in the pathway protein modification; protein glycosylation. Beta-galactosyltransferase involved in elongation of beta-1,6-linked galactan side chains on arabinogalactan proteins. Required for the progression of embryogenesis beyond the globular stage. Beta-galactosyltransferase involved in the biosynthesis of type II arabinogalactan. Transfers galactose from UDP-galactose to a mixture of various oligosaccharides derived from arabinogalactan proteins. Forms a complex with GALT29A that can work cooperatively to enhance the activities of adding galactose residues at O6 positions to beta-1,6-linked galactan and beta-1,3-linked galactan. This chain is Beta-1,6-galactosyltransferase GALT31A, found in Arabidopsis thaliana (Mouse-ear cress).